Consider the following 412-residue polypeptide: Class E basic helix-loop-helix protein 40 (412 aa).

Residues 1–139 (MERIPSAQPP…LSGRNVETGQ (139 aa)) form an essential for interaction with BMAL1, E-box binding and repressor activity against the CLOCK-BMAL1 heterodimer region. The bHLH domain maps to 52-107 (TYKLPHRLIEKKRRDRINECIAQLKDLLPEHLKLTTLGHLEKAVVLELTLKHVKAL). The necessary for interaction with RXRA and repressor activity against RXRA stretch occupies residues 75 to 79 (LKDLL). Positions 142-175 (FCSGFQTCAREVLQYLAKHENTRDLKSSQLVTHL) constitute an Orange domain. Residue Lys-159 forms a Glycyl lysine isopeptide (Lys-Gly) (interchain with G-Cter in SUMO1, SUMO2 and SUMO3) linkage. Lys-167 is covalently cross-linked (Glycyl lysine isopeptide (Lys-Gly) (interchain with G-Cter in SUMO2)). Positions 182 to 303 (LLQGGTSRKP…LSDDEGHFTS (122 aa)) are disordered. Residue Ser-235 is modified to Phosphoserine. Positions 248-271 (ESEKGDLRSEQPCFKSDHGRRFTM) are enriched in basic and acidic residues. Residue Lys-279 forms a Glycyl lysine isopeptide (Lys-Gly) (interchain with G-Cter in SUMO1); alternate linkage. Residue Lys-279 forms a Glycyl lysine isopeptide (Lys-Gly) (interchain with G-Cter in SUMO1, SUMO2 and SUMO3); alternate linkage. Residue Lys-279 forms a Glycyl lysine isopeptide (Lys-Gly) (interchain with G-Cter in SUMO2); alternate linkage. Lys-288 is covalently cross-linked (Glycyl lysine isopeptide (Lys-Gly) (interchain with G-Cter in SUMO2)). Ser-383 carries the phosphoserine modification.

In terms of assembly, homodimer. Heterodimer with BHLHE41/DEC2. Interacts with TCF3/E47. Interacts with ubiquitin-conjugating enzyme UBE2I/UBC9. Interacts with HDAC1, SUMO1, RXRA and BMAL1. In terms of processing, ubiquitinated; which may lead to proteasomal degradation. Sumoylation inhibits its ubiquitination and promotes its negative regulation of the CLOCK-BMAL1 heterodimer transcriptional activator activity. Expressed in cartilage, spleen, intestine, lung, and to a lesser extent in heart, brain, liver, muscle and stomach.

The protein localises to the cytoplasm. The protein resides in the nucleus. Functionally, transcriptional repressor involved in the regulation of the circadian rhythm by negatively regulating the activity of the clock genes and clock-controlled genes. Acts as the negative limb of a novel autoregulatory feedback loop (DEC loop) which differs from the one formed by the PER and CRY transcriptional repressors (PER/CRY loop). Both these loops are interlocked as it represses the expression of PER1/2 and in turn is repressed by PER1/2 and CRY1/2. Represses the activity of the circadian transcriptional activator: CLOCK-BMAL1|BMAL2 heterodimer by competing for the binding to E-box elements (5'-CACGTG-3') found within the promoters of its target genes. Negatively regulates its own expression and the expression of DBP and BHLHE41/DEC2. Acts as a corepressor of RXR and the RXR-LXR heterodimers and represses the ligand-induced RXRA and NR1H3/LXRA transactivation activity. May be involved in the regulation of chondrocyte differentiation via the cAMP pathway. Represses the transcription of NR0B2 and attentuates the transactivation of NR0B2 by the CLOCK-BMAL1 complex. Drives the circadian rhythm of blood pressure through transcriptional repression of ATP1B1 in the cardiovascular system. In Homo sapiens (Human), this protein is Class E basic helix-loop-helix protein 40 (BHLHE40).